A 401-amino-acid polypeptide reads, in one-letter code: Argininosuccinate synthase (401 aa).

ATP is bound by residues 9–17 (AYSGGLDTS) and Ala-36. Tyr-87 and Ser-92 together coordinate L-citrulline. Gly-117 is a binding site for ATP. Positions 119, 123, and 124 each coordinate L-aspartate. Position 123 (Asn-123) interacts with L-citrulline. Arg-127, Ser-176, Ser-185, Glu-261, and Tyr-273 together coordinate L-citrulline.

It belongs to the argininosuccinate synthase family. Type 1 subfamily. Homotetramer.

The protein localises to the cytoplasm. It carries out the reaction L-citrulline + L-aspartate + ATP = 2-(N(omega)-L-arginino)succinate + AMP + diphosphate + H(+). It functions in the pathway amino-acid biosynthesis; L-arginine biosynthesis; L-arginine from L-ornithine and carbamoyl phosphate: step 2/3. The sequence is that of Argininosuccinate synthase from Syntrophobacter fumaroxidans (strain DSM 10017 / MPOB).